The sequence spans 196 residues: Large ribosomal subunit protein bL25 (196 aa).

It belongs to the bacterial ribosomal protein bL25 family. CTC subfamily. Part of the 50S ribosomal subunit; part of the 5S rRNA/L5/L18/L25 subcomplex. Contacts the 5S rRNA. Binds to the 5S rRNA independently of L5 and L18.

This is one of the proteins that binds to the 5S RNA in the ribosome where it forms part of the central protuberance. The polypeptide is Large ribosomal subunit protein bL25 (Geotalea daltonii (strain DSM 22248 / JCM 15807 / FRC-32) (Geobacter daltonii)).